Consider the following 122-residue polypeptide: Large ribosomal subunit protein uL14 (122 aa).

It belongs to the universal ribosomal protein uL14 family. In terms of assembly, part of the 50S ribosomal subunit. Forms a cluster with proteins L3 and L19. In the 70S ribosome, L14 and L19 interact and together make contacts with the 16S rRNA in bridges B5 and B8.

In terms of biological role, binds to 23S rRNA. Forms part of two intersubunit bridges in the 70S ribosome. The chain is Large ribosomal subunit protein uL14 from Gluconobacter oxydans (strain 621H) (Gluconobacter suboxydans).